The following is an 870-amino-acid chain: Adhesin AWP1 (870 aa).

An N-terminal signal peptide occupies residues 1–18 (MSLITIFAFFIKATLVLS). Asn224 carries an N-linked (GlcNAc...) asparagine glycan. An intrachain disulfide couples Cys284 to Cys322. A disordered region spans residues 329–835 (ITPSSSVEPS…TRQTSVIAPG (507 aa)). The span at 331 to 566 (PSSSVEPSSS…SSSAVVPTSS (236 aa)) shows a compositional bias: low complexity. Over residues 567-576 (AGGGNGGDNG) the composition is skewed to gly residues. Over residues 577–641 (QPGADGQPGA…PGAAGQPGAA (65 aa)) the composition is skewed to low complexity. The segment covering 642-652 (GQPGAGSGGGS) has biased composition (gly residues). Asn669 carries N-linked (GlcNAc...) asparagine glycosylation. Gly residues predominate over residues 675 to 721 (SGTGNGQAGSGQAGSGQVGSGQAGAGQAGSGQAGAGQAGSGQAGAGQ). 2 stretches are compositionally biased toward polar residues: residues 724-735 (LDNTASGQSEGG) and 792-801 (GSGTDQSSGR).

Its subcellular location is the secreted. The protein localises to the cell wall. In terms of biological role, may play a role in cell adhesion. This chain is Adhesin AWP1, found in Candida glabrata (strain ATCC 2001 / BCRC 20586 / JCM 3761 / NBRC 0622 / NRRL Y-65 / CBS 138) (Yeast).